Reading from the N-terminus, the 142-residue chain is Large ribosomal subunit protein uL11 (142 aa).

The protein belongs to the universal ribosomal protein uL11 family. As to quaternary structure, part of the ribosomal stalk of the 50S ribosomal subunit. Interacts with L10 and the large rRNA to form the base of the stalk. L10 forms an elongated spine to which L12 dimers bind in a sequential fashion forming a multimeric L10(L12)X complex. In terms of processing, one or more lysine residues are methylated.

In terms of biological role, forms part of the ribosomal stalk which helps the ribosome interact with GTP-bound translation factors. The sequence is that of Large ribosomal subunit protein uL11 from Mycoplasma capricolum subsp. capricolum (strain California kid / ATCC 27343 / NCTC 10154).